Reading from the N-terminus, the 377-residue chain is Queuine tRNA-ribosyltransferase (377 aa).

Asp94 (proton acceptor) is an active-site residue. Residues 94–98 (DSGGF), Asp148, Gln191, and Gly218 each bind substrate. Residues 249 to 255 (GVGTPDD) form an RNA binding region. Asp268 functions as the Nucleophile in the catalytic mechanism. The segment at 273–277 (TRAGR) is RNA binding; important for wobble base 34 recognition.

Belongs to the queuine tRNA-ribosyltransferase family. Homodimer. Within each dimer, one monomer is responsible for RNA recognition and catalysis, while the other monomer binds to the replacement base PreQ1.

It carries out the reaction 7-aminomethyl-7-carbaguanine + guanosine(34) in tRNA = 7-aminomethyl-7-carbaguanosine(34) in tRNA + guanine. It participates in tRNA modification; tRNA-queuosine biosynthesis. Catalyzes the base-exchange of a guanine (G) residue with the queuine precursor 7-aminomethyl-7-deazaguanine (PreQ1) at position 34 (anticodon wobble position) in tRNAs with GU(N) anticodons (tRNA-Asp, -Asn, -His and -Tyr). Catalysis occurs through a double-displacement mechanism. The nucleophile active site attacks the C1' of nucleotide 34 to detach the guanine base from the RNA, forming a covalent enzyme-RNA intermediate. The proton acceptor active site deprotonates the incoming PreQ1, allowing a nucleophilic attack on the C1' of the ribose to form the product. After dissociation, two additional enzymatic reactions on the tRNA convert PreQ1 to queuine (Q), resulting in the hypermodified nucleoside queuosine (7-(((4,5-cis-dihydroxy-2-cyclopenten-1-yl)amino)methyl)-7-deazaguanosine). This is Queuine tRNA-ribosyltransferase from Brucella suis biovar 1 (strain 1330).